The following is a 118-amino-acid chain: Large ribosomal subunit protein uL18 (118 aa).

This sequence belongs to the universal ribosomal protein uL18 family. In terms of assembly, part of the 50S ribosomal subunit; part of the 5S rRNA/L5/L18/L25 subcomplex. Contacts the 5S and 23S rRNAs.

Functionally, this is one of the proteins that bind and probably mediate the attachment of the 5S RNA into the large ribosomal subunit, where it forms part of the central protuberance. This is Large ribosomal subunit protein uL18 from Rickettsia bellii (strain OSU 85-389).